We begin with the raw amino-acid sequence, 557 residues long: MTFQSDIEIARAANKLPIQEIGARLGIPSGDLIPYGHDKAKVSQGFIRGLADRPDGKLILVTAINPTPAGEGKTTTTVGLGDGLNRIGKRAVICIREASLGPNFGMKGGAAGGGRSQVVPMEDMNLHFTGDFHAITSAHNLLSAMIDNHIYWGNDLGLDARRITWRRVMDMNDRALRDMVVNLGGVSNGFPRQTGFDITVASEVMAILCLAEDLEDLERRLGGIVVGYRRDRSPVFCRDLKADGAMAVLLKDAMQPNLVQTIENNPAFVHGGPFANIAHGCNSVIATRTALKLADYVVTEAGFGADLGAEKFFDIKCRKAGLKPSAAVVVATVRALKMNGGVAREDLGREDVAALKRGCANLGRHIANVKGFGVPVVVAINHFTTDTEAEIEAVRAYAAGQGAEAILCRHWADGSAGIEDLARKVVQLAETPSMFAPLYPDEMPLFEKMETVARRIYHAHDVIADHVIRDQLRAWEDAGYGALPVCMAKTQYSFTTDAAIRGAPEGHSVPIREVRLSAGAGFVVAICGEIRTMPGLPREPAAEVIRLNGEGRIEGLF.

67-74 (TPAGEGKT) contacts ATP.

This sequence belongs to the formate--tetrahydrofolate ligase family.

It catalyses the reaction (6S)-5,6,7,8-tetrahydrofolate + formate + ATP = (6R)-10-formyltetrahydrofolate + ADP + phosphate. It participates in one-carbon metabolism; tetrahydrofolate interconversion. In Cereibacter sphaeroides (strain ATCC 17025 / ATH 2.4.3) (Rhodobacter sphaeroides), this protein is Formate--tetrahydrofolate ligase.